Consider the following 364-residue polypeptide: Paraneoplastic antigen Ma2 homolog (364 aa).

A2 is modified (N-acetylalanine). Positions 335–353 (EEEEASFENESIEEPEEGD) are enriched in acidic residues. The interval 335–364 (EEEEASFENESIEEPEEGDGYGGWNHEGDD) is disordered. The span at 354–364 (GYGGWNHEGDD) shows a compositional bias: gly residues.

This sequence belongs to the PNMA family.

It is found in the nucleus. The protein resides in the nucleolus. This is Paraneoplastic antigen Ma2 homolog (PNMA2) from Macaca fascicularis (Crab-eating macaque).